We begin with the raw amino-acid sequence, 170 residues long: Translationally-controlled tumor protein homolog (170 aa).

Residues 1–170 form the TCTP domain; it reads MLIYSDIITG…WKHGLKETKV (170 aa).

Belongs to the TCTP family.

Its subcellular location is the cytoplasm. The protein resides in the cytoskeleton. Involved in protein synthesis. Involved in microtubule stabilization. In Neurospora crassa (strain ATCC 24698 / 74-OR23-1A / CBS 708.71 / DSM 1257 / FGSC 987), this protein is Translationally-controlled tumor protein homolog.